Reading from the N-terminus, the 291-residue chain is Phosphatidylcholine-sterol acyltransferase (291 aa).

Residue Asn28 is glycosylated (N-linked (GlcNAc...) asparagine). Ser125 functions as the Nucleophile in the catalytic mechanism. Residue Asn179 is glycosylated (N-linked (GlcNAc...) asparagine). Cys220 and Cys263 are oxidised to a cystine. The Charge relay system role is filled by Asp252. An N-linked (GlcNAc...) asparagine glycan is attached at Asn280.

This sequence belongs to the AB hydrolase superfamily. Lipase family.

The protein resides in the secreted. The enzyme catalyses a sterol + a 1,2-diacyl-sn-glycero-3-phosphocholine = a sterol ester + a 1-acyl-sn-glycero-3-phosphocholine. With respect to regulation, APOA1 is the most potent activator in plasma. Also activated by APOE, APOC1 and APOA4. Functionally, central enzyme in the extracellular metabolism of plasma lipoproteins. Synthesized mainly in the liver and secreted into plasma where it converts cholesterol and phosphatidylcholines (lecithins) to cholesteryl esters and lysophosphatidylcholines on the surface of high and low density lipoproteins (HDLs and LDLs). The cholesterol ester is then transported back to the liver. Has a preference for plasma 16:0-18:2 or 18:O-18:2 phosphatidylcholines. Also produced in the brain by primary astrocytes, and esterifies free cholesterol on nascent APOE-containing lipoproteins secreted from glia and influences cerebral spinal fluid (CSF) APOE- and APOA1 levels. Together with APOE and the cholesterol transporter ABCA1, plays a key role in the maturation of glial-derived, nascent lipoproteins. Required for remodeling high-density lipoprotein particles into their spherical forms. In Myodes glareolus (Bank vole), this protein is Phosphatidylcholine-sterol acyltransferase (LCAT).